Reading from the N-terminus, the 204-residue chain is Holliday junction branch migration complex subunit RuvA (204 aa).

The segment at 1 to 63 is domain I; sequence MIGKLSGKAD…EEHIHLYGFL (63 aa). The tract at residues 64–142 is domain II; that stretch reads TLEEKNFFNL…KISSSSAIKD (79 aa). Positions 143–153 are flexible linker; sequence SLNIKNITPVT. Positions 153–204 are domain III; the sequence is TSNEVMKALINLGFSRFEAQNVVQGIITQNPKISIDELIKTALKNRNSKFFS.

This sequence belongs to the RuvA family. In terms of assembly, homotetramer. Forms an RuvA(8)-RuvB(12)-Holliday junction (HJ) complex. HJ DNA is sandwiched between 2 RuvA tetramers; dsDNA enters through RuvA and exits via RuvB. An RuvB hexamer assembles on each DNA strand where it exits the tetramer. Each RuvB hexamer is contacted by two RuvA subunits (via domain III) on 2 adjacent RuvB subunits; this complex drives branch migration. In the full resolvosome a probable DNA-RuvA(4)-RuvB(12)-RuvC(2) complex forms which resolves the HJ.

It localises to the cytoplasm. In terms of biological role, the RuvA-RuvB-RuvC complex processes Holliday junction (HJ) DNA during genetic recombination and DNA repair, while the RuvA-RuvB complex plays an important role in the rescue of blocked DNA replication forks via replication fork reversal (RFR). RuvA specifically binds to HJ cruciform DNA, conferring on it an open structure. The RuvB hexamer acts as an ATP-dependent pump, pulling dsDNA into and through the RuvAB complex. HJ branch migration allows RuvC to scan DNA until it finds its consensus sequence, where it cleaves and resolves the cruciform DNA. The chain is Holliday junction branch migration complex subunit RuvA from Rickettsia canadensis (strain McKiel).